A 318-amino-acid polypeptide reads, in one-letter code: Phospho-N-acetylmuramoyl-pentapeptide-transferase (318 aa).

10 helical membrane-spanning segments follow: residues 5-25 (LKPL…VLAF), 50-70 (PTMG…VLAP), 71-91 (PSPL…IGLV), 115-135 (VLLG…GSVI), 139-159 (VTGW…LLLV), 173-193 (GLAA…ALTL), 198-218 (LVTF…YNFH), 222-242 (VFMG…LAIM), 248-268 (VLPV…LQVV), and 298-318 (VLFF…LLTI).

Belongs to the glycosyltransferase 4 family. MraY subfamily. It depends on Mg(2+) as a cofactor.

The protein localises to the cell membrane. The enzyme catalyses UDP-N-acetyl-alpha-D-muramoyl-L-alanyl-gamma-D-glutamyl-meso-2,6-diaminopimeloyl-D-alanyl-D-alanine + di-trans,octa-cis-undecaprenyl phosphate = di-trans,octa-cis-undecaprenyl diphospho-N-acetyl-alpha-D-muramoyl-L-alanyl-D-glutamyl-meso-2,6-diaminopimeloyl-D-alanyl-D-alanine + UMP. It participates in cell wall biogenesis; peptidoglycan biosynthesis. Catalyzes the initial step of the lipid cycle reactions in the biosynthesis of the cell wall peptidoglycan: transfers peptidoglycan precursor phospho-MurNAc-pentapeptide from UDP-MurNAc-pentapeptide onto the lipid carrier undecaprenyl phosphate, yielding undecaprenyl-pyrophosphoryl-MurNAc-pentapeptide, known as lipid I. The polypeptide is Phospho-N-acetylmuramoyl-pentapeptide-transferase (Moorella thermoacetica (strain ATCC 39073 / JCM 9320)).